The primary structure comprises 440 residues: Thymidine phosphorylase (440 aa).

Belongs to the thymidine/pyrimidine-nucleoside phosphorylase family. In terms of assembly, homodimer.

It catalyses the reaction thymidine + phosphate = 2-deoxy-alpha-D-ribose 1-phosphate + thymine. It participates in pyrimidine metabolism; dTMP biosynthesis via salvage pathway; dTMP from thymine: step 1/2. In terms of biological role, the enzymes which catalyze the reversible phosphorolysis of pyrimidine nucleosides are involved in the degradation of these compounds and in their utilization as carbon and energy sources, or in the rescue of pyrimidine bases for nucleotide synthesis. The polypeptide is Thymidine phosphorylase (Enterobacter sp. (strain 638)).